Here is a 470-residue protein sequence, read N- to C-terminus: Uronate isomerase (470 aa).

It belongs to the metallo-dependent hydrolases superfamily. Uronate isomerase family.

It catalyses the reaction D-glucuronate = D-fructuronate. The enzyme catalyses aldehydo-D-galacturonate = keto-D-tagaturonate. It participates in carbohydrate metabolism; pentose and glucuronate interconversion. The protein is Uronate isomerase of Shigella boydii serotype 18 (strain CDC 3083-94 / BS512).